A 267-amino-acid polypeptide reads, in one-letter code: 4-hydroxy-2-oxo-heptane-1,7-dioate aldolase (267 aa).

Histidine 45 acts as the Proton acceptor in catalysis. A substrate-binding site is contributed by glutamine 147. Residue glutamate 149 participates in a divalent metal cation binding. 2 residues coordinate substrate: alanine 174 and aspartate 175. Aspartate 175 contributes to the a divalent metal cation binding site.

It belongs to the HpcH/HpaI aldolase family. Homohexamer; trimer of dimers. A divalent metal cation serves as cofactor.

The enzyme catalyses 4-hydroxy-2-oxoheptanedioate = succinate semialdehyde + pyruvate. The protein operates within aromatic compound metabolism; 4-hydroxyphenylacetate degradation; pyruvate and succinate semialdehyde from 4-hydroxyphenylacetate: step 7/7. Functionally, catalyzes the reversible retro-aldol cleavage of 4-hydroxy-2-ketoheptane-1,7-dioate (HKHD) to pyruvate and succinic semialdehyde. The protein is 4-hydroxy-2-oxo-heptane-1,7-dioate aldolase of Shigella flexneri.